Reading from the N-terminus, the 208-residue chain is Kininogen-1b (208 aa).

An N-terminal signal peptide occupies residues 1–23 (MRLWFCLSFFIVLCLEHFPETLA). The span at 27-44 (NVPESEEKTEQYLRDLPK) shows a compositional bias: basic and acidic residues. Residues 27–208 (NVPESEEKTE…RGKFHSQSHV (182 aa)) are disordered.

This sequence belongs to the bradykinin-related peptide family. In terms of tissue distribution, expressed by the skin glands.

It localises to the secreted. In vitro, produces constriction of guinea pig ileum smooth muscle. May target bradykinin receptors (BDKRB). The polypeptide is Kininogen-1b (Bombina maxima (Giant fire-bellied toad)).